The primary structure comprises 272 residues: D-aminoacyl-tRNA deacylase (272 aa).

Belongs to the DtdA deacylase family. Monomer. The cofactor is Zn(2+).

The enzyme catalyses a D-aminoacyl-tRNA + H2O = a tRNA + a D-alpha-amino acid + H(+). It catalyses the reaction glycyl-tRNA(Ala) + H2O = tRNA(Ala) + glycine + H(+). Functionally, D-aminoacyl-tRNA deacylase with broad substrate specificity. By recycling D-aminoacyl-tRNA to D-amino acids and free tRNA molecules, this enzyme counteracts the toxicity associated with the formation of D-aminoacyl-tRNA entities in vivo. This is D-aminoacyl-tRNA deacylase from Hyperthermus butylicus (strain DSM 5456 / JCM 9403 / PLM1-5).